Here is a 622-residue protein sequence, read N- to C-terminus: Low affinity potassium transport system protein Kup (622 aa).

The next 12 membrane-spanning stretches (helical) occupy residues 9 to 29 (LSAV…TSPL), 46 to 66 (PDVV…VVSV), 101 to 121 (ILVV…VITP), 137 to 157 (PALD…LFVI), 165 to 185 (VGKL…LLGL), 213 to 233 (VSFF…ALYA), 247 to 267 (WFTV…ALLL), 276 to 296 (PFFL…ATLA), 337 to 357 (IYIP…IIGF), 363 to 383 (LAAA…ILFC), 395 to 415 (FLVV…FSAN), and 416 to 436 (VLKL…MFII).

Belongs to the HAK/KUP transporter (TC 2.A.72) family.

Its subcellular location is the cell inner membrane. The catalysed reaction is K(+)(in) + H(+)(in) = K(+)(out) + H(+)(out). Responsible for the low-affinity transport of potassium into the cell. Likely operates as a K(+):H(+) symporter. The polypeptide is Low affinity potassium transport system protein Kup (Yersinia pestis (strain Pestoides F)).